Reading from the N-terminus, the 344-residue chain is Follistatin (344 aa).

The N-terminal stretch at 1-29 is a signal peptide; the sequence is MARPRHQPGGLCLLLLLLCQFMEDRSAQA. The TB domain maps to 30–103; the sequence is GNCWLRQAKN…TCENVDCGPG (74 aa). Disulfide bonds link Cys32/Cys55, Cys42/Cys88, Cys56/Cys91, Cys95/Cys106, Cys100/Cys116, Cys118/Cys150, Cys122/Cys143, Cys132/Cys164, Cys168/Cys179, Cys173/Cys189, Cys192/Cys225, Cys196/Cys218, Cys207/Cys239, Cys245/Cys256, Cys250/Cys267, Cys270/Cys302, Cys274/Cys295, and Cys284/Cys316. Residues 94 to 117 enclose the Follistatin-like 1 domain; that stretch reads TCENVDCGPGKKCRMNKKNKPRCV. A Kazal-like 1 domain is found at 112–166; it reads NKPRCVCAPDCSNITWKGLVCGLDGKTYRNECALLKARCKEQPELQVQYQGKCKK. A glycan (N-linked (GlcNAc...) asparagine) is linked at Asn124. One can recognise a Follistatin-like 2 domain in the interval 167-190; that stretch reads TCRDVFCPGSSTCVVDQTNNAYCV. The 56-residue stretch at 186–241 folds into the Kazal-like 2 domain; sequence NAYCVTCNRICPEPTSSEQYLCGNDGVTYPSACHLRKATCLLGRSIGLAYEGKCIK. The Follistatin-like 3 domain occupies 244–268; the sequence is SCDDIQCTGGKKCLWDFKVGRGRCS. Positions 261-318 constitute a Kazal-like 3 domain; the sequence is KVGRGRCSLCGELCPESKSEEPVCASDNATYASECAMKEAACSSGVLLEVKHSGSCNS. N-linked (GlcNAc...) asparagine glycosylation is present at Asn288. Residues 316-344 are disordered; that stretch reads CNSISEDTEDEEEDEDQDYSFPISSILEW. A compositionally biased stretch (acidic residues) spans 321 to 333; that stretch reads EDTEDEEEDEDQD.

Monomer.

The protein localises to the secreted. In terms of biological role, binds directly to activin and functions as an activin antagonist. Specific inhibitor of the biosynthesis and secretion of pituitary follicle stimulating hormone (FSH). The protein is Follistatin of Bubalus bubalis (Domestic water buffalo).